A 103-amino-acid polypeptide reads, in one-letter code: MASLKKSLFLVLFLGFVSLSICEEEKRENEGNENEEEDENHEEGSEEKRGLLDLAKHVIGIASKLGKRSEEKRYHPFGKRSEEKRYHPFGKRSEEKRYPPIGK.

Residues 1 to 22 form the signal peptide; the sequence is MASLKKSLFLVLFLGFVSLSIC. Positions 23-49 are excised as a propeptide; it reads EEEKRENEGNENEEEDENHEEGSEEKR. The tract at residues 24 to 50 is disordered; the sequence is EEKRENEGNENEEEDENHEEGSEEKRG. Positions 31–41 are enriched in acidic residues; sequence GNENEEEDENH. Leu-65 is subject to Leucine amide. Positions 67-103 are disordered; it reads KRSEEKRYHPFGKRSEEKRYHPFGKRSEEKRYPPIGK. Residues 69–73 constitute a propeptide that is removed on maturation; it reads SEEKR. The residue at position 77 (Phe-77) is a Phenylalanine amide. The propeptide occupies 81–85; sequence SEEKR. Phe-89 bears the Phenylalanine amide mark. Residues 93-97 constitute a propeptide that is removed on maturation; sequence SEEKR. The residue at position 101 (Ile-101) is an Isoleucine amide.

This sequence belongs to the frog skin active peptide (FSAP) family. Brevinin subfamily. In terms of tissue distribution, expressed by the skin glands.

The protein resides in the secreted. Functionally, fallaxidin-1.3 shows no antibacterial activity against Gram-positive or Gram-negative bacteria. Does not inhibit the formation of NO by neuronal nitric oxide synthase. Has no effect on splenocyte proliferation or smooth muscle contraction. In terms of biological role, fallaxidin-1.4 shows no antibacterial activity against Gram-positive or Gram-negative bacteria. Does not inhibit the formation of NO by neuronal nitric oxide synthase. Has no effect on splenocyte proliferation or smooth muscle contraction. Fallaxidin-3.1 shows antibacterial activity against the Gram-positive bacteria E.faecalis (MIC=100 uM) and L.lactis (MIC=100 uM). No antibacterial activity against the Gram-positive bacteria B.cereus, L.innocua, M.luteus, S.epidermidis, S.uberis and S.aureus, or the Gram-negative bacteria E.cloacae and E.coli. This Litoria fallax (Eastern dwarf tree frog) protein is Preprofallaxidin-6.